A 446-amino-acid polypeptide reads, in one-letter code: Telomere-binding protein 51 kDa subunit (446 aa).

Belongs to the telombin family. As to quaternary structure, monomer.

The protein resides in the nucleus. It is found in the chromosome. It localises to the telomere. May function as protective capping of the single-stranded telomeric overhang. May also participate in telomere length regulation during DNA replication. Binds specifically to the T4G4-containing extension on the 3'strand and protects this region of the telomere from nuclease digestion and chemical modification. The polypeptide is Telomere-binding protein 51 kDa subunit (Euplotes crassus).